The chain runs to 225 residues: Doublesex- and mab-3-related transcription factor C1 (225 aa).

A compositionally biased stretch (basic and acidic residues) spans 1–12; it reads MQRPSGSREVRK. 2 disordered regions span residues 1 to 49 and 179 to 216; these read MQRP…SHVH and QTRH…LPSG. The span at 27 to 37 shows a compositional bias: basic residues; it reads RVKKHVVRRQK.

It belongs to the DMRT family.

The sequence is that of Doublesex- and mab-3-related transcription factor C1 (Dmrtc1) from Rattus norvegicus (Rat).